The chain runs to 360 residues: Phospho-N-acetylmuramoyl-pentapeptide-transferase (360 aa).

Helical transmembrane passes span 24–44, 69–89, 92–112, 133–153, 158–178, 199–219, 239–259, 263–283, 288–308, and 337–357; these read RAVMAALTALAFSLMFGPWTI, GTPTMGGSLILTAITVSTLLW, WANPYIWILLGVLLATGALGF, MVWQSSVAIIAGLALFYLAAN, ILIVPFFKQIALPLGVVGFLV, GLATFPVVLVAAGLAIFAYVS, VAIFCTAMCGACLGFLWFNAY, VFMGDVGALALGAALGTVAVI, FVLVIMGGLFVVEAVSVMLQV, and QVVVRFWIITIVLVLIGLSTL.

It belongs to the glycosyltransferase 4 family. MraY subfamily. Requires Mg(2+) as cofactor.

It is found in the cell inner membrane. It catalyses the reaction UDP-N-acetyl-alpha-D-muramoyl-L-alanyl-gamma-D-glutamyl-meso-2,6-diaminopimeloyl-D-alanyl-D-alanine + di-trans,octa-cis-undecaprenyl phosphate = di-trans,octa-cis-undecaprenyl diphospho-N-acetyl-alpha-D-muramoyl-L-alanyl-D-glutamyl-meso-2,6-diaminopimeloyl-D-alanyl-D-alanine + UMP. It functions in the pathway cell wall biogenesis; peptidoglycan biosynthesis. Functionally, catalyzes the initial step of the lipid cycle reactions in the biosynthesis of the cell wall peptidoglycan: transfers peptidoglycan precursor phospho-MurNAc-pentapeptide from UDP-MurNAc-pentapeptide onto the lipid carrier undecaprenyl phosphate, yielding undecaprenyl-pyrophosphoryl-MurNAc-pentapeptide, known as lipid I. This Neisseria meningitidis serogroup C (strain 053442) protein is Phospho-N-acetylmuramoyl-pentapeptide-transferase.